The chain runs to 277 residues: Sulfur carrier protein FdhD (277 aa).

Residue Cys-121 is the Cysteine persulfide intermediate of the active site. 260–265 (FCKPGR) contacts Mo-bis(molybdopterin guanine dinucleotide).

The protein belongs to the FdhD family.

It is found in the cytoplasm. Functionally, required for formate dehydrogenase (FDH) activity. Acts as a sulfur carrier protein that transfers sulfur from IscS to the molybdenum cofactor prior to its insertion into FDH. This is Sulfur carrier protein FdhD from Escherichia coli O81 (strain ED1a).